The following is a 375-amino-acid chain: STAGKVIKCKAAIAWELNKPLSIEQIEVAPPKAHEVRIKILATGVCRSDEHVISGAFRMPLPMVLGHEAAGVVESVGEGVTCVKPGDKVIPLFAPQCGKCRACQSPKGNLCTSNDLNSGSGLMPDGTSRFTCKGKSIHHFISTSTFTEYTVVHENSVVKIDPSAPLEKVCLIGCGFSTGYGAAMQTAKVEPGSICAVFGLGGVGLSVVMGCKAAGASRIIGVDINKDKFAKAKEMGATECINPLDFKKPINEVLFDLTGGEGVDYSFEVIGRTETMISAFTSCHQNLGTSVVVGVPPNASMITYNPLMLFTGRTWKGCVFGGWKSKDSVPKLVSDFMQKKFVLDPLITHTLPFEKINEGFDLLRSGKSIRTVLIF.

Ser-1 is modified (N-acetylserine). Residues Cys-46, His-67, Cys-97, Cys-100, Cys-103, Cys-111, and Cys-174 each contribute to the Zn(2+) site. Residues 199–204, Asp-223, Lys-228, 293–295, and Arg-370 each bind NAD(+); these read GLGGVG and VGV.

The protein belongs to the zinc-containing alcohol dehydrogenase family. Class-I subfamily. As to quaternary structure, homodimer. Zn(2+) serves as cofactor.

The protein localises to the cytoplasm. The enzyme catalyses a primary alcohol + NAD(+) = an aldehyde + NADH + H(+). It catalyses the reaction a secondary alcohol + NAD(+) = a ketone + NADH + H(+). The chain is Alcohol dehydrogenase 1 from Naja naja (Indian cobra).